A 159-amino-acid chain; its full sequence is Endoribonuclease YbeY (159 aa).

Zn(2+) is bound by residues His123, His127, and His133.

It belongs to the endoribonuclease YbeY family. It depends on Zn(2+) as a cofactor.

Its subcellular location is the cytoplasm. Its function is as follows. Single strand-specific metallo-endoribonuclease involved in late-stage 70S ribosome quality control and in maturation of the 3' terminus of the 16S rRNA. The sequence is that of Endoribonuclease YbeY from Bacillus pumilus (strain SAFR-032).